A 455-amino-acid chain; its full sequence is Argininosuccinate lyase (455 aa).

This sequence belongs to the lyase 1 family. Argininosuccinate lyase subfamily.

The protein localises to the cytoplasm. The catalysed reaction is 2-(N(omega)-L-arginino)succinate = fumarate + L-arginine. It participates in amino-acid biosynthesis; L-arginine biosynthesis; L-arginine from L-ornithine and carbamoyl phosphate: step 3/3. The protein is Argininosuccinate lyase of Shewanella baltica (strain OS155 / ATCC BAA-1091).